Consider the following 407-residue polypeptide: NADH dehydrogenase [ubiquinone] 1 alpha subcomplex subunit 10, mitochondrial (407 aa).

The N-terminal 60 residues, 1–60 (MTAVFRVGLVRLVSRATQSPNLLQAQTNALPAAFQQRCSISGKTMRGGPRVPKAAPYPYK), are a transit peptide targeting the mitochondrion.

It belongs to the complex I NDUFA10 subunit family. Complex I is composed of 45 different subunits. This a component of the hydrophobic protein fraction. Forms a complex including sicily, ND-42 and Hsp83; the complex is necessary to chaperone ND-42 in the cytoplasm before mitochondrial import; the interaction between sicily and ND-42 is direct and occurs preferably between the unprocessed forms in the cytoplasm. FAD is required as a cofactor. As to expression, expressed in muscles (at protein level).

Its subcellular location is the mitochondrion matrix. The protein localises to the cytoplasm. Functionally, accessory subunit of the mitochondrial membrane respiratory chain NADH dehydrogenase (Complex I), that is believed not to be involved in catalysis. Complex I functions in the transfer of electrons from NADH to the respiratory chain. The immediate electron acceptor for the enzyme is believed to be ubiquinone. The chain is NADH dehydrogenase [ubiquinone] 1 alpha subcomplex subunit 10, mitochondrial from Drosophila melanogaster (Fruit fly).